Reading from the N-terminus, the 274-residue chain is (R)-stereoselective amidase (274 aa).

Residues 1-234 form the CN hydrolase domain; that stretch reads MKIELVQLAG…EVRHVVELDL (234 aa). Glu-40 acts as the Proton acceptor in catalysis. The active-site Proton donor is Lys-108. The Nucleophile role is filled by Cys-140.

In terms of assembly, monomer.

The enzyme catalyses (R)-piperazine-2-carboxamide + H2O = (R)-piperazine-2-carboxylate + NH4(+). It carries out the reaction beta-alaninamide + H2O = beta-alanine + NH4(+). Completely inhibited by p-chloromercuribenzoate, N-ethylmaleimide, MnSO(4), MnCl(2), CoCl(2), NiCl(2), CuSO(4), CuCl(2), ZnSO(4), ZnCl(2), AgNO(3), CdCl(2), HgCl(2) and PbCl(2). Partially inhibited by FeCl(3) and Fe(NH(4))(2)(SO(4))(2). Slightly enhanced by dithiothreitol. Unaffected by LiBr, H(2)BO(3), NaCl, MgSO(4), MgCl(2), AlCl(3), KCl, CaCl(2), CrCl(3), RbCl, Na(2)MoO(4), (NH(4))(6)Mo(7)O(24), CsCl and BaCl(2). Unaffected by the chelating agents o-phenanthroline, 8-hydroxyquinoline, enthylenediaminetetraacetic acid and alpha,alpha'-dipyridyl. Not inhibited by the carbonyl reagents hydroxylamine, phenylhydrazine, hydrazine, D,L-penicillamine and D-cycloserine. Not affected by the serine protease inhibitor phenylmethanesulfonyl fluoride, the serine/cysteine protease inhibitor leupeptine or the aspartic protease inhibitor pepstatin. Functionally, hydrolyzes (R)-piperazine-2-carboxamide and (R)-piperazine-2-tert-butylcarboxamide with strict R-stereoselectivity. Also active towards beta-alaninamide, piperidine-3-carboxmide, D-glutaminamide and slightly active towards L-glutaminamide and piperidine-4-carboxamide. This chain is (R)-stereoselective amidase, found in Pseudomonas sp.